The sequence spans 152 residues: Sec-independent protein translocase protein TatB (152 aa).

The helical transmembrane segment at Met-1 to Gly-21 threads the bilayer.

It belongs to the TatB family. In terms of assembly, the Tat system comprises two distinct complexes: a TatABC complex, containing multiple copies of TatA, TatB and TatC subunits, and a separate TatA complex, containing only TatA subunits. Substrates initially bind to the TatABC complex, which probably triggers association of the separate TatA complex to form the active translocon.

The protein resides in the cell inner membrane. In terms of biological role, part of the twin-arginine translocation (Tat) system that transports large folded proteins containing a characteristic twin-arginine motif in their signal peptide across membranes. Together with TatC, TatB is part of a receptor directly interacting with Tat signal peptides. TatB may form an oligomeric binding site that transiently accommodates folded Tat precursor proteins before their translocation. This chain is Sec-independent protein translocase protein TatB, found in Ruegeria pomeroyi (strain ATCC 700808 / DSM 15171 / DSS-3) (Silicibacter pomeroyi).